A 329-amino-acid polypeptide reads, in one-letter code: Ribosomal protein L11 methyltransferase (329 aa).

Positions 177, 198, 220, and 264 each coordinate S-adenosyl-L-methionine.

Belongs to the methyltransferase superfamily. PrmA family.

It is found in the cytoplasm. The catalysed reaction is L-lysyl-[protein] + 3 S-adenosyl-L-methionine = N(6),N(6),N(6)-trimethyl-L-lysyl-[protein] + 3 S-adenosyl-L-homocysteine + 3 H(+). Its function is as follows. Methylates ribosomal protein L11. The chain is Ribosomal protein L11 methyltransferase from Helicobacter pylori (strain HPAG1).